Reading from the N-terminus, the 981-residue chain is Probable NAD kinase 2, chloroplastic (981 aa).

Positions 319 to 364 (APSAEQVQRFAEIVSDSAKKPIYLHSQEGISRTSAMVSRWKQYVTR) are calmodulin-binding. 2 disordered regions span residues 369–413 (ATQN…DRTM) and 551–601 (TNGK…AERN). Composition is skewed to polar residues over residues 387 to 406 (TEQL…NGTP), 551 to 563 (TNGK…ASTS), and 581 to 596 (SDTS…GSQK).

Belongs to the NAD kinase family.

It is found in the plastid. Its subcellular location is the chloroplast. It carries out the reaction NAD(+) + ATP = ADP + NADP(+) + H(+). Its function is as follows. Involved in chlorophyll synthesis and chloroplast protection against oxidative damage. The chain is Probable NAD kinase 2, chloroplastic from Oryza sativa subsp. japonica (Rice).